The following is a 171-amino-acid chain: Endoribonuclease YbeY (171 aa).

3 residues coordinate Zn(2+): His-130, His-134, and His-140.

This sequence belongs to the endoribonuclease YbeY family. It depends on Zn(2+) as a cofactor.

The protein localises to the cytoplasm. In terms of biological role, single strand-specific metallo-endoribonuclease involved in late-stage 70S ribosome quality control and in maturation of the 3' terminus of the 16S rRNA. This Neisseria meningitidis serogroup A / serotype 4A (strain DSM 15465 / Z2491) protein is Endoribonuclease YbeY.